The sequence spans 360 residues: Nucleoporin SEH1 (360 aa).

6 WD repeats span residues 10–49 (DHKD…DWHC), 55–96 (THSG…SNDK), 111–152 (DSRT…NLSQ), 160–210 (SCKL…RKYA), 217–258 (TVTD…KELT), and 276–315 (NHNS…NWKC). A Glycyl lysine isopeptide (Lys-Gly) (interchain with G-Cter in SUMO2) cross-link involves residue K12. 2 positions are modified to phosphoserine: S179 and S190. Residues 324 to 354 (SPVNGSSQQGTSNPSLGSNIPSLQNSLNGSS) show a composition bias toward polar residues. A disordered region spans residues 324 to 360 (SPVNGSSQQGTSNPSLGSNIPSLQNSLNGSSAGRKHS).

This sequence belongs to the WD repeat SEC13 family. In terms of assembly, component of the Nup107-160 subcomplex of the nuclear pore complex (NPC). The Nup107-160 subcomplex includes NUP160, NUP133, NUP107, NUP98, NUP85, NUP43, NUP37, SEH1 and SEC13. The SEH1 subunit appears to be only weakly associated with the Nup107-160 subcomplex. Component of the GATOR2 subcomplex, composed of MIOS, SEC13, SEH1L, WDR24 and WDR59. The GATOR2 complex interacts with CASTOR1 and CASTOR2; the interaction is negatively regulated by arginine. The GATOR2 complex interacts with SESN1, SESN2 and SESN3; the interaction is negatively regulated by amino acids. SESN1, SESN2 and SESN3 convey leucine availability via direct interaction with SEH1L and WDR24.

Its subcellular location is the chromosome. It localises to the centromere. The protein resides in the kinetochore. The protein localises to the nucleus. It is found in the nuclear pore complex. Its subcellular location is the lysosome membrane. With respect to regulation, the GATOR2 complex is negatively regulated by the upstream amino acid sensors CASTOR1 and SESN2, which sequester the GATOR2 complex in absence of amino acids. In the presence of abundant amino acids, GATOR2 is released from CASTOR1 and SESN2 and activated. Component of the Nup107-160 subcomplex of the nuclear pore complex (NPC). The Nup107-160 subcomplex is required for the assembly of a functional NPC. The Nup107-160 subcomplex is also required for normal kinetochore microtubule attachment, mitotic progression and chromosome segregation. This subunit plays a role in recruitment of the Nup107-160 subcomplex to the kinetochore. In terms of biological role, as a component of the GATOR2 complex, functions as an activator of the amino acid-sensing branch of the mTORC1 signaling pathway. The GATOR2 complex indirectly activates mTORC1 through the inhibition of the GATOR1 subcomplex. GATOR2 probably acts as an E3 ubiquitin-protein ligase toward GATOR1. In the presence of abundant amino acids, the GATOR2 complex mediates ubiquitination of the NPRL2 core component of the GATOR1 complex, leading to GATOR1 inactivation. In the absence of amino acids, GATOR2 is inhibited, activating the GATOR1 complex. Within the GATOR2 complex, SEC13 and SEH1L are required to stabilize the complex. The chain is Nucleoporin SEH1 (SEH1L) from Pongo abelii (Sumatran orangutan).